The sequence spans 126 residues: UPF0325 protein VFMJ11_2099 (126 aa).

Belongs to the UPF0325 family.

The polypeptide is UPF0325 protein VFMJ11_2099 (Aliivibrio fischeri (strain MJ11) (Vibrio fischeri)).